A 512-amino-acid polypeptide reads, in one-letter code: ATP synthase subunit alpha (512 aa).

170–177 (GDRQTGKT) provides a ligand contact to ATP.

It belongs to the ATPase alpha/beta chains family. In terms of assembly, F-type ATPases have 2 components, CF(1) - the catalytic core - and CF(0) - the membrane proton channel. CF(1) has five subunits: alpha(3), beta(3), gamma(1), delta(1), epsilon(1). CF(0) has three main subunits: a(1), b(2) and c(9-12). The alpha and beta chains form an alternating ring which encloses part of the gamma chain. CF(1) is attached to CF(0) by a central stalk formed by the gamma and epsilon chains, while a peripheral stalk is formed by the delta and b chains.

It is found in the cell inner membrane. It carries out the reaction ATP + H2O + 4 H(+)(in) = ADP + phosphate + 5 H(+)(out). Functionally, produces ATP from ADP in the presence of a proton gradient across the membrane. The alpha chain is a regulatory subunit. This is ATP synthase subunit alpha from Solibacter usitatus (strain Ellin6076).